Consider the following 204-residue polypeptide: NADH-ubiquinone oxidoreductase subunit 9 (204 aa).

This sequence belongs to the complex I 30 kDa subunit family. As to quaternary structure, complex I is composed of about 30 different subunits.

It localises to the mitochondrion inner membrane. It carries out the reaction a ubiquinone + NADH + 5 H(+)(in) = a ubiquinol + NAD(+) + 4 H(+)(out). Its function is as follows. Core subunit of the mitochondrial membrane respiratory chain NADH dehydrogenase (Complex I) that is believed to belong to the minimal assembly required for catalysis. Complex I functions in the transfer of electrons from NADH to the respiratory chain. The immediate electron acceptor for the enzyme is believed to be ubiquinone. In Reclinomonas americana, this protein is NADH-ubiquinone oxidoreductase subunit 9 (NAD9).